A 103-amino-acid chain; its full sequence is Histone H4 variant TH091 (103 aa).

The disordered stretch occupies residues 1 to 20 (MSGRDKGGKGLGKGGAKRHR). At serine 2 the chain carries N-acetylserine. An N6-acetyllysine mark is found at lysine 6, lysine 9, lysine 13, lysine 17, and lysine 21. The DNA-binding element occupies 17-21 (KRHRK).

This sequence belongs to the histone H4 family. As to quaternary structure, the nucleosome is a histone octamer containing two molecules each of H2A, H2B, H3 and H4 assembled in one H3-H4 heterotetramer and two H2A-H2B heterodimers. The octamer wraps approximately 147 bp of DNA.

It localises to the nucleus. It is found in the chromosome. Functionally, core component of nucleosome. Nucleosomes wrap and compact DNA into chromatin, limiting DNA accessibility to the cellular machineries which require DNA as a template. Histones thereby play a central role in transcription regulation, DNA repair, DNA replication and chromosomal stability. DNA accessibility is regulated via a complex set of post-translational modifications of histones, also called histone code, and nucleosome remodeling. The polypeptide is Histone H4 variant TH091 (Triticum aestivum (Wheat)).